A 188-amino-acid chain; its full sequence is MGLLILGLGNPGLEFSLTRHNVGFSLLDKIVSKNGLFLKRKKKYEYSELKMISGRVILVKPLTYMNLSGSLFPSIFSDFYMCIKNLLVVLDNVDLPLGKCRLKERGGVSTHNGLRSISSVLGSSNYSRLYIGVGSNLMRDIKSFVLSRFCKDEMDRLEKLYDFLSDELIDISEANFKNKVQKINSSNF.

Residue Phe-15 participates in tRNA binding. Catalysis depends on His-20, which acts as the Proton acceptor. Tyr-64, Asn-66, and Asn-112 together coordinate tRNA.

It belongs to the PTH family. In terms of assembly, monomer.

Its subcellular location is the cytoplasm. It catalyses the reaction an N-acyl-L-alpha-aminoacyl-tRNA + H2O = an N-acyl-L-amino acid + a tRNA + H(+). Hydrolyzes ribosome-free peptidyl-tRNAs (with 1 or more amino acids incorporated), which drop off the ribosome during protein synthesis, or as a result of ribosome stalling. In terms of biological role, catalyzes the release of premature peptidyl moieties from peptidyl-tRNA molecules trapped in stalled 50S ribosomal subunits, and thus maintains levels of free tRNAs and 50S ribosomes. The protein is Peptidyl-tRNA hydrolase of Borreliella burgdorferi (strain ATCC 35210 / DSM 4680 / CIP 102532 / B31) (Borrelia burgdorferi).